Consider the following 343-residue polypeptide: N-acetyl-gamma-glutamyl-phosphate reductase (343 aa).

Cys-149 is an active-site residue.

This sequence belongs to the NAGSA dehydrogenase family. Type 1 subfamily.

It localises to the cytoplasm. The enzyme catalyses N-acetyl-L-glutamate 5-semialdehyde + phosphate + NADP(+) = N-acetyl-L-glutamyl 5-phosphate + NADPH + H(+). The protein operates within amino-acid biosynthesis; L-arginine biosynthesis; N(2)-acetyl-L-ornithine from L-glutamate: step 3/4. Catalyzes the NADPH-dependent reduction of N-acetyl-5-glutamyl phosphate to yield N-acetyl-L-glutamate 5-semialdehyde. The chain is N-acetyl-gamma-glutamyl-phosphate reductase from Methanococcus maripaludis (strain C5 / ATCC BAA-1333).